A 485-amino-acid polypeptide reads, in one-letter code: Auxin transporter protein 1 (485 aa).

Over 1 to 59 the chain is Cytoplasmic; sequence MSEGVEAIVANDNGTDQVNGNRTGKDNEEHDGSTGSNLSNFLWHGGSVWDAWFSCASNQ. Residues 12-22 are compositionally biased toward polar residues; that stretch reads DNGTDQVNGNR. The disordered stretch occupies residues 12-33; that stretch reads DNGTDQVNGNRTGKDNEEHDGS. Positions 23-32 are enriched in basic and acidic residues; sequence TGKDNEEHDG. The helical transmembrane segment at 60-77 threads the bilayer; that stretch reads VAQVLLTLPYSFSQLGML. At 78–79 the chain is on the extracellular side; it reads SG. The chain crosses the membrane as a helical span at residues 80-100; that stretch reads IVLQIFYGLLGSWTAYLISVL. Topologically, residues 101–135 are cytoplasmic; sequence YVEYRARKEKEGKSFKNHVIQWFEVLDGLLGSYWK. The chain crosses the membrane as a helical span at residues 136–156; that stretch reads ALGLAFNCTFLLFGSVIQLIA. Residues 157-172 are Extracellular-facing; the sequence is CASNIYYINDHLDKRT. A helical transmembrane segment spans residues 173 to 193; it reads WTYIFGACCATTVFIPSFHNY. The Cytoplasmic portion of the chain corresponds to 194 to 196; it reads RIW. The chain crosses the membrane as a helical span at residues 197 to 217; that stretch reads SFLGLGMTTYTAWYLAIASII. Residues 218-232 lie on the Extracellular side of the membrane; sequence HGQAEGVKHSGPTKL. A helical transmembrane segment spans residues 233-253; it reads VLYFTGATNILYTFGGHAVTV. Residues 254–266 lie on the Cytoplasmic side of the membrane; sequence EIMHAMWKPQKFK. Residues 267–287 traverse the membrane as a helical segment; it reads YIYLMATLYVFTLTIPSAAAV. Topologically, residues 288 to 314 are extracellular; that stretch reads YWAFGDALLDHSNAFSLMPKNAWRDAA. Residues 315–335 form a helical membrane-spanning segment; the sequence is VILMLIHQFITFGFACTPLYF. Residues 336-356 lie on the Cytoplasmic side of the membrane; sequence VWEKVIGMHDTKSICLRALAR. A helical membrane pass occupies residues 357–377; that stretch reads LPVVIPIWFLAIIFPFFGPIN. Serine 378 is a topological domain (extracellular). A helical membrane pass occupies residues 379-399; it reads AVGALLVSFTVYIIPSLAHML. Residues 400 to 425 are Cytoplasmic-facing; sequence TYRSASARQNAAEKPPFFMPSWTAMY. The chain crosses the membrane as a helical span at residues 426 to 446; it reads VLNAFVVVWVLIVGFGFGGWA. The Extracellular segment spans residues 447–485; the sequence is SVTNFVRQVDTFGLFAKCYQCKPAAAAAHAPVSALHHRL.

The protein belongs to the amino acid/polyamine transporter 2 family. Amino acid/auxin permease (AAAP) (TC 2.A.18.1) subfamily. In terms of tissue distribution, expressed in root and shoot apical tissues. In root apex, confined to stele initials, protophloem poles, statolith-containing S2 columella cells, lateral root cap cells (LRC), and in epidermal cells from the distal elongation zone (DEZ) up to central elongation zone (CEZ).

The protein resides in the cell membrane. With respect to regulation, auxin uptake mediated by AUX1 is inhibited by chromosaponin-1 (CSI), 1-naphthoxyacetic acid (1-NOA) and 3-chloro-4-hydroxyphenylacetic acid (CHPAA). Carrier protein involved in proton-driven auxin influx. Mediates the formation of auxin gradient from developing leaves (site of auxin biosynthesis) to tips by contributing to the loading of auxin in vascular tissues and facilitating acropetal (base to tip) auxin transport within inner tissues of the root apex, and basipetal (tip to base) auxin transport within outer tissues of the root apex. Unloads auxin from the mature phloem to deliver the hormone to the root meristem via the protophloem cell files. Coordinated subcellular localization of AUX1 is regulated by a brefeldin A-sensitive (BFA) vesicle trafficking process. Involved in lateral root formation, trichoblast polarization and root hair elongation. Required for gravitropism and thigmotropism, especially in roots, by modulating responses to auxin, ethylene and cytokinins such as benzyladenine (BA). Needed for ammonium-mediated root-growth inhibition. Confers sensitivity to the herbicide 2,4-dichlorophenoxyacetic acid (2,4-D, auxin analog), and to polar auxin transport inhibitors such as N-1-naphthylphthalamic acid (NPA) and 2,3,5-triiodobenzoic acid (TIBA). The chain is Auxin transporter protein 1 (AUX1) from Arabidopsis thaliana (Mouse-ear cress).